The following is an 83-amino-acid chain: Small ribosomal subunit protein bS16 (83 aa).

The protein belongs to the bacterial ribosomal protein bS16 family.

The polypeptide is Small ribosomal subunit protein bS16 (Shewanella amazonensis (strain ATCC BAA-1098 / SB2B)).